The sequence spans 159 residues: Protransforming growth factor alpha (159 aa).

The signal sequence occupies residues 1-23; it reads MVPATGQLALLALGILLAVCQAL. Residues 24-38 constitute a propeptide, removed in mature form; the sequence is ENSTSPLSDSPVAAA. At 24-97 the chain is on the extracellular side; the sequence is ENSTSPLSDS…AVVAASQKKQ (74 aa). Asparagine 25 is a glycosylation site (N-linked (GlcNAc...) asparagine). The EGF-like domain occupies 44-83; that stretch reads NKCPDSHTQYCFHGTCRFLVQEEKPACVCHSGYVGVRCEH. 3 disulfides stabilise this stretch: cysteine 46-cysteine 59, cysteine 54-cysteine 70, and cysteine 72-cysteine 81. Positions 89-159 are cleaved as a propeptide — removed in mature form; it reads VVAASQKKQA…TACCHSETVV (71 aa). A helical transmembrane segment spans residues 98 to 123; that stretch reads AITALVVVSIVALAVLIITCVLIHCC. At 124-159 the chain is on the cytoplasmic side; it reads QLRKHCEWCRALVCRHEKPSALLKGRTACCHSETVV. Residues cysteine 152 and cysteine 153 are each lipidated (S-palmitoyl cysteine).

In terms of assembly, interacts with the PDZ domains of SDCBP and SNTA1. The interaction with SDCBP, is required for the targeting to the cell surface. In the endoplasmic reticulum, in its immature form (i.e. with a prosegment and lacking full N-glycosylation), interacts with CNIH. In the Golgi apparatus, may form a complex with CNIH and GORASP2. Interacts (via cytoplasmic C-terminal domain) with NKD2. Interacts with MAGI3.

Its subcellular location is the secreted. It is found in the extracellular space. It localises to the cell membrane. In terms of biological role, TGF alpha is a mitogenic polypeptide that is able to bind to the EGF receptor/EGFR and to act synergistically with TGF beta to promote anchorage-independent cell proliferation in soft agar. The polypeptide is Protransforming growth factor alpha (Tgfa) (Mus musculus (Mouse)).